Reading from the N-terminus, the 252-residue chain is Triosephosphate isomerase (252 aa).

10–12 is a substrate binding site; it reads NWK. The active-site Electrophile is the His-96. Glu-168 serves as the catalytic Proton acceptor. Substrate contacts are provided by residues Gly-174, Ser-213, and 234-235; that span reads GG.

This sequence belongs to the triosephosphate isomerase family. As to quaternary structure, homodimer.

It is found in the cytoplasm. The enzyme catalyses D-glyceraldehyde 3-phosphate = dihydroxyacetone phosphate. The protein operates within carbohydrate biosynthesis; gluconeogenesis. It functions in the pathway carbohydrate degradation; glycolysis; D-glyceraldehyde 3-phosphate from glycerone phosphate: step 1/1. Functionally, involved in the gluconeogenesis. Catalyzes stereospecifically the conversion of dihydroxyacetone phosphate (DHAP) to D-glyceraldehyde-3-phosphate (G3P). The protein is Triosephosphate isomerase of Nitrosomonas europaea (strain ATCC 19718 / CIP 103999 / KCTC 2705 / NBRC 14298).